A 412-amino-acid polypeptide reads, in one-letter code: Cytochrome p450 CYP199A2 (412 aa).

Substrate is bound by residues 94 to 97 (RPPS) and S247. Heme is bound at residue C361.

It belongs to the cytochrome P450 family. Interacts with the ferredoxin-like iron-sulfur protein ThcC. Heme serves as cofactor.

It is found in the cytoplasm. It catalyses the reaction 4-methoxybenzoate + AH2 + O2 = 4-hydroxybenzoate + formaldehyde + A + H2O. Its function is as follows. The oxidative demethylation of 4-methoxybenzoate requires the participation of the monooxygenase CYP199A2, the ferredoxin-like protein ThcC/RPA1872 and a ferredoxin reductase to mediate the transfer of electrons from NADH to CYP199A2. It is also active with 4-ethylbenzoate. This Rhodopseudomonas palustris (strain ATCC BAA-98 / CGA009) protein is Cytochrome p450 CYP199A2.